The following is a 174-amino-acid chain: Myelin basic protein (174 aa).

The tract at residues 1–86 (MASQKRSSFR…GRPGDDNPVV (86 aa)) is disordered. The residue at position 2 (A2) is an N-acetylalanine; in forms C1, C2 and C3. At Q4 the chain carries Deamidated glutamine; in forms C1 and C2; partial. Phosphoserine; in forms C2 and C3 is present on S8. S19 is modified (phosphoserine; in form C2). Over residues 22 to 35 (DHARHGSPRHRDSG) the composition is skewed to basic and acidic residues. The residue at position 25 (R25) is a Citrulline; in forms C1, C2 and C3. A Phosphoserine; in forms C2 and C3 modification is found at S34. Position 42 is a citrulline; in form C3 (R42). Over residues 45–61 (GGDRHVPRRGFGKDIHA) the composition is skewed to basic and acidic residues. A Phosphoserine; in forms C2 and C3 modification is found at S65. Q72 carries the post-translational modification Deamidated glutamine; in forms C1, C2 and C3; partial. Phosphoserine; in form C2 is present on S74. Position 91 is a deamidated asparagine; in forms C1, C2 and C3; partial (N91). T97 is subject to Phosphothreonine; in forms C2 and C3. Deamidated glutamine; in forms C1, C2 and C3; partial is present on Q102. At Q102 the chain carries Deamidated glutamine; in form C1. At R106 the chain carries Omega-N-methylarginine; in forms C1, C2 and C3; alternate. R106 is subject to Symmetric dimethylarginine; in forms C1, C2 and C3; alternate. A phosphoserine; in forms C2 and C3 mark is found at S114 and S142. Residues 126 to 174 (SGKFYEHKSAHKGHKGSYHEGQGTLSKIFKLGGSGSRPGSRSGSPVARR) are disordered. A Deamidated glutamine; in forms C1, C2 and C3; partial modification is found at Q147. Positions 162–174 (RPGSRSGSPVARR) are enriched in low complexity. S165 carries the phosphoserine; in forms C2 and C3 modification. R166 is modified (citrulline; in forms C2 and C3). Position 169 is a phosphoserine; in forms C2 and C3 (S169).

Belongs to the myelin basic protein family. Homodimer. Post-translationally, several charge isomers are produced as a result of optional post-translational modifications, such as phosphorylation of serine or threonine residues, deamidation of glutamine or asparagine residues, citrullination and methylation of arginine residues. Chicken MBP contains 4 charge components denoted as C1, C2, C3 and C8. C1 lacks any phosphorylation sites, whereas C2 and C3 contain respectively 10 and 8 phosphorylation sites and arginine residues modified to citrulline. All three charge components contain deamidated glutamines and asparagine, and a methylated arginine.

It localises to the myelin membrane. In terms of biological role, is, with PLP, the most abundant protein component of the myelin membrane in the CNS. Has a role in both the formation and stabilization of this compact multilayer arrangement of bilayers. Each splice variant and charge isomer may have a specialized function in the assembly of an optimized, biochemically functional myelin membrane. The chain is Myelin basic protein (MBP) from Gallus gallus (Chicken).